Consider the following 97-residue polypeptide: Intermembrane phospholipid transport system binding protein MlaB (97 aa).

An STAS domain is found at 1-97 (MSESLSWMQT…YNLPADVLPR (97 aa)).

The complex is composed of two ATP-binding proteins (MlaF), two transmembrane proteins (MlaE), two cytoplasmic solute-binding proteins (MlaB) and six periplasmic solute-binding proteins (MlaD).

The protein resides in the cytoplasm. Functionally, part of the ABC transporter complex MlaFEDB, which is involved in a phospholipid transport pathway that maintains lipid asymmetry in the outer membrane by retrograde trafficking of phospholipids from the outer membrane to the inner membrane. MlaB plays critical roles in both the assembly and activity of the complex. May act by modulating MlaF structure and stability. This is Intermembrane phospholipid transport system binding protein MlaB from Escherichia coli (strain K12).